The chain runs to 354 residues: NAD-dependent protein deacetylase hst2-2 (354 aa).

Residues 16–279 (QCQNQTTLDS…REVARHLGWD (264 aa)) enclose the Deacetylase sirtuin-type domain. Residues 43-63 (GAGL…TGLY) and 126-129 (QNID) each bind NAD(+). The active-site Proton acceptor is the histidine 146. The Zn(2+) site is built by cysteine 154, cysteine 157, cysteine 178, and cysteine 183. NAD(+) is bound by residues 220 to 222 (GTS), 245 to 247 (NRE), and cysteine 265.

It belongs to the sirtuin family. Class I subfamily. The cofactor is Zn(2+).

It localises to the nucleus. The catalysed reaction is N(6)-acetyl-L-lysyl-[protein] + NAD(+) + H2O = 2''-O-acetyl-ADP-D-ribose + nicotinamide + L-lysyl-[protein]. NAD-dependent histone deacetylase, which could function in telomeric silencing, cell cycle progression and chromosome stability. The sequence is that of NAD-dependent protein deacetylase hst2-2 from Emericella nidulans (strain FGSC A4 / ATCC 38163 / CBS 112.46 / NRRL 194 / M139) (Aspergillus nidulans).